A 172-amino-acid polypeptide reads, in one-letter code: Alpha-crystallin A chain (172 aa).

At Met1 the chain carries N-acetylmethionine. The interval 1–63 (MDVTIQHPWF…RTVLDSGISE (63 aa)) is required for complex formation with BFSP1 and BFSP2. Deamidated glutamine; partial is present on Gln6. At Ser45 the chain carries Phosphoserine. Gln50 is subject to Deamidated glutamine; partial. One can recognise a sHSP domain in the interval 52-163 (LFRTVLDSGI…HERAIPVARE (112 aa)). Residue Lys70 is modified to N6-acetyllysine. Deamidated glutamine; partial is present on Gln90. The residue at position 99 (Lys99) is an N6-acetyllysine. His100 serves as a coordination point for Zn(2+). At Asn101 the chain carries Deamidated asparagine; partial. Zn(2+)-binding residues include Glu102 and His107. Ser122 carries the phosphoserine modification. A Deamidated asparagine; partial modification is found at Asn123. A Deamidated glutamine; partial modification is found at Gln147. His154 is a Zn(2+) binding site. A glycan (O-linked (GlcNAc) serine) is linked at Ser168.

The protein belongs to the small heat shock protein (HSP20) family. In terms of assembly, heteromer composed of three CRYAA and one CRYAB subunits. Inter-subunit bridging via zinc ions enhances stability, which is crucial as there is no protein turn over in the lens. Can also form homodimers and homotetramers (dimers of dimers) which serve as the building blocks of homooligomers. Within homooligomers, the zinc-binding motif is created from residues of 3 different molecules. His-100 and Glu-102 from one molecule are ligands of the zinc ion, and His-107 and His-154 residues from additional molecules complete the site with tetrahedral coordination geometry. Part of a complex required for lens intermediate filament formation composed of BFSP1, BFSP2 and CRYAA. Post-translationally, acetylation at Lys-70 may increase chaperone activity. In terms of processing, undergoes age-dependent proteolytical cleavage at the C-terminus.

The protein localises to the cytoplasm. It localises to the nucleus. Contributes to the transparency and refractive index of the lens. Acts as a chaperone, preventing aggregation of various proteins under a wide range of stress conditions. Required for the correct formation of lens intermediate filaments as part of a complex composed of BFSP1, BFSP2 and CRYAA. The chain is Alpha-crystallin A chain (CRYAA) from Macaca mulatta (Rhesus macaque).